Here is a 77-residue protein sequence, read N- to C-terminus: Large ribosomal subunit protein eL14 (77 aa).

The protein belongs to the eukaryotic ribosomal protein eL14 family.

The chain is Large ribosomal subunit protein eL14 from Methanococcus maripaludis (strain C6 / ATCC BAA-1332).